The following is a 436-amino-acid chain: T-box transcription factor T (436 aa).

Residues 51 to 219 (LWLRFKELTN…YNPFAKAFLD (169 aa)) constitute a DNA-binding region (T-box).

In terms of assembly, monomer. Binds DNA as a monomer.

Its subcellular location is the nucleus. In terms of biological role, involved in the transcriptional regulation of genes required for mesoderm formation and differentiation. Binds to a palindromic T site 5'-TTCACACCTAGGTGTGAA-3' DNA sequence and activates gene transcription when bound to such a site. The sequence is that of T-box transcription factor T from Mus musculus (Mouse).